The sequence spans 317 residues: GTPase Era (317 aa).

An Era-type G domain is found at 23 to 190 (RSGFVALIGP…MDYLVETLPE (168 aa)). A G1 region spans residues 31–38 (GPTNAGKS). Residue 31 to 38 (GPTNAGKS) coordinates GTP. The tract at residues 57–61 (QTTRA) is G2. The tract at residues 78-81 (DTPG) is G3. Residues 78–82 (DTPGI) and 140–143 (NKID) contribute to the GTP site. The tract at residues 140-143 (NKID) is G4. The G5 stretch occupies residues 169–171 (ISA). A KH type-2 domain is found at 221–298 (LHQELPYASH…HLFLFVKVRE (78 aa)).

Belongs to the TRAFAC class TrmE-Era-EngA-EngB-Septin-like GTPase superfamily. Era GTPase family. Monomer.

Its subcellular location is the cytoplasm. The protein resides in the cell inner membrane. Its function is as follows. An essential GTPase that binds both GDP and GTP, with rapid nucleotide exchange. Plays a role in 16S rRNA processing and 30S ribosomal subunit biogenesis and possibly also in cell cycle regulation and energy metabolism. The sequence is that of GTPase Era from Agrobacterium fabrum (strain C58 / ATCC 33970) (Agrobacterium tumefaciens (strain C58)).